Consider the following 165-residue polypeptide: Small ribosomal subunit protein uS5 (165 aa).

One can recognise an S5 DRBM domain in the interval 13 to 76; it reads LEEKVLVVNR…EAARKNLITI (64 aa).

Belongs to the universal ribosomal protein uS5 family. As to quaternary structure, part of the 30S ribosomal subunit. Contacts proteins S4 and S8.

Its function is as follows. With S4 and S12 plays an important role in translational accuracy. Located at the back of the 30S subunit body where it stabilizes the conformation of the head with respect to the body. This is Small ribosomal subunit protein uS5 from Chlamydia abortus (strain DSM 27085 / S26/3) (Chlamydophila abortus).